The following is a 1069-amino-acid chain: Protogenin B (1069 aa).

The signal sequence occupies residues Met-1–Gly-26. Topologically, residues Phe-27–Ser-936 are extracellular. 4 consecutive Ig-like domains span residues Leu-30–Thr-117, Leu-122–Val-208, Pro-221–Thr-308, and Pro-312–Ile-396. 2 disulfide bridges follow: Cys-51/Cys-100 and Cys-143/Cys-191. N-linked (GlcNAc...) asparagine glycosylation is found at Asn-81, Asn-88, Asn-180, and Asn-229. An intrachain disulfide couples Cys-242 to Cys-290. Residues Asn-299 and Asn-306 are each glycosylated (N-linked (GlcNAc...) asparagine). Residues Lys-317–Glu-336 are disordered. An intrachain disulfide couples Cys-333 to Cys-380. 5 consecutive Fibronectin type-III domains span residues Ala-406 to Asp-500, Pro-502 to Thr-601, Pro-608 to Thr-701, Pro-711 to Glu-804, and Pro-809 to Lys-904. N-linked (GlcNAc...) asparagine glycosylation is found at Asn-458, Asn-473, and Asn-560. A compositionally biased stretch (polar residues) spans Pro-590–Thr-605. The tract at residues Pro-590–Ala-609 is disordered. N-linked (GlcNAc...) asparagine glycans are attached at residues Asn-618, Asn-720, and Asn-834. A helical membrane pass occupies residues Gly-937 to Leu-957. The Cytoplasmic segment spans residues Ser-958 to Ala-1069.

The protein belongs to the immunoglobulin superfamily. DCC family. Initially expressed in the ventral forebrain and ventral spinal cord. Later, also expressed in the midbrain and in parts of the diencephalon and hindbrain.

The protein resides in the membrane. May play a role in anteroposterior axis elongation. In Danio rerio (Zebrafish), this protein is Protogenin B.